Reading from the N-terminus, the 173-residue chain is MLVDIVPIGDLPAQVKREASAALRGVYECDVTVHEEQSIPDGAFDHSRSQYRAEQFIELASRIGSGEKNIGITAEDLYYRRRNYVFGLAYLNGNGSVISTYRLQTSSDGGLKSKSPDAVFADRIRKEVVHEIGHTFGLEHCDNSKCVMSFSPTVREVDVKEENLCGSCNRLLY.

H130 contacts Zn(2+). The active-site Proton acceptor is the E131. Zn(2+)-binding residues include H134, H140, C141, C146, C165, and C168.

The protein belongs to the peptidase M54 family. Monomer. Requires Zn(2+) as cofactor.

Its function is as follows. Probable zinc metalloprotease whose natural substrate is unknown. The protein is Archaemetzincin of Haloquadratum walsbyi (strain DSM 16790 / HBSQ001).